A 483-amino-acid chain; its full sequence is Alginate biosynthesis protein AlgA (483 aa).

Belongs to the mannose-6-phosphate isomerase type 2 family. Monomer. Co(2+) is required as a cofactor.

The enzyme catalyses D-mannose 6-phosphate = D-fructose 6-phosphate. It catalyses the reaction alpha-D-mannose 1-phosphate + GTP + H(+) = GDP-alpha-D-mannose + diphosphate. The protein operates within nucleotide-sugar biosynthesis; GDP-alpha-D-mannose biosynthesis; GDP-alpha-D-mannose from alpha-D-mannose 1-phosphate (GTP route): step 1/1. It participates in nucleotide-sugar biosynthesis; GDP-alpha-D-mannose biosynthesis; alpha-D-mannose 1-phosphate from D-fructose 6-phosphate: step 1/2. Produces a precursor for alginate polymerization. The alginate layer provides a protective barrier against host immune defenses and antibiotics. The protein is Alginate biosynthesis protein AlgA (algA) of Pseudomonas fluorescens.